The sequence spans 301 residues: GTP cyclohydrolase FolE2 (301 aa).

The protein belongs to the GTP cyclohydrolase IV family.

It catalyses the reaction GTP + H2O = 7,8-dihydroneopterin 3'-triphosphate + formate + H(+). It participates in cofactor biosynthesis; 7,8-dihydroneopterin triphosphate biosynthesis; 7,8-dihydroneopterin triphosphate from GTP: step 1/1. Functionally, converts GTP to 7,8-dihydroneopterin triphosphate. This Pseudomonas syringae pv. tomato (strain ATCC BAA-871 / DC3000) protein is GTP cyclohydrolase FolE2.